The primary structure comprises 305 residues: Probable aspartoacylase (305 aa).

Zn(2+) contacts are provided by H13 and E16. Substrate contacts are provided by residues R55 and 62–63 (NR). Residue H105 coordinates Zn(2+). Residues E163 and Y273 each coordinate substrate.

It belongs to the AspA/AstE family. Aspartoacylase subfamily. Zn(2+) is required as a cofactor.

It carries out the reaction an N-acyl-L-aspartate + H2O = a carboxylate + L-aspartate. The chain is Probable aspartoacylase from Prochlorococcus marinus (strain NATL1A).